Consider the following 285-residue polypeptide: Inositol oxygenase (285 aa).

The tract at residues 1-28 is disordered; the sequence is MKVAADPDPSLVSQRDMEPEAAKDKDSF. The span at 15-28 shows a compositional bias: basic and acidic residues; that stretch reads RDMEPEAAKDKDSF. Arg29 is a substrate binding site. Position 33 is a phosphoserine (Ser33). 85–87 contributes to the substrate binding site; that stretch reads DES. Fe cation-binding residues include His98, His123, and Asp124. Substrate contacts are provided by residues Lys127 and 141-142; that span reads GD. Fe cation is bound by residues His194, His220, and Asp253. 220–221 contacts substrate; that stretch reads HS.

Belongs to the myo-inositol oxygenase family. Fe cation is required as a cofactor.

Its subcellular location is the cytoplasm. The enzyme catalyses myo-inositol + O2 = D-glucuronate + H2O + H(+). Its pathway is polyol metabolism; myo-inositol degradation into D-glucuronate; D-glucuronate from myo-inositol: step 1/1. The polypeptide is Inositol oxygenase (MIOX) (Bos taurus (Bovine)).